An 89-amino-acid chain; its full sequence is Small ribosomal subunit protein uS15 (89 aa).

This sequence belongs to the universal ribosomal protein uS15 family. As to quaternary structure, part of the 30S ribosomal subunit. Forms a bridge to the 50S subunit in the 70S ribosome, contacting the 23S rRNA.

Functionally, one of the primary rRNA binding proteins, it binds directly to 16S rRNA where it helps nucleate assembly of the platform of the 30S subunit by binding and bridging several RNA helices of the 16S rRNA. Forms an intersubunit bridge (bridge B4) with the 23S rRNA of the 50S subunit in the ribosome. This is Small ribosomal subunit protein uS15 from Bdellovibrio bacteriovorus (strain ATCC 15356 / DSM 50701 / NCIMB 9529 / HD100).